Consider the following 209-residue polypeptide: uncharacterized protein (209 aa).

Residues Met-1 to Gly-167 form the Nudix hydrolase domain.

This is an uncharacterized protein from Orgyia pseudotsugata (Douglas-fir tussock moth).